A 1172-amino-acid chain; its full sequence is Thrombospondin-2 (1172 aa).

The first 18 residues, 1 to 18 (MVWRLVLLALWVWPSTQA), serve as a signal peptide directing secretion. The Laminin G-like domain maps to 19-215 (GHQDKDTTFD…LQNVHLVFEN (197 aa)). The segment at 19-232 (GHQDKDTTFD…KKGCQQGQGA (214 aa)) is heparin-binding. N151, N316, and N330 each carry an N-linked (GlcNAc...) asparagine glycan. Positions 318–375 (SACWQDGRFFAENETWVVDSCTTCTCKKFKTICHQITCPPATCASPSFVEGECCPSCL) constitute a VWFC domain. 3 consecutive TSP type-1 domains span residues 381–431 (EEGW…SKCD), 437–492 (DGGW…APCP), and 494–549 (DGRW…RSCP). 27 cysteine pairs are disulfide-bonded: C393/C425, C397/C430, C408/C415, C449/C486, C453/C491, C464/C476, C506/C543, C510/C548, C521/C533, C553/C564, C558/C574, C577/C588, C594/C610, C601/C619, C622/C646, C652/C665, C659/C678, C680/C691, C707/C715, C720/C740, C756/C776, C779/C799, C815/C835, C838/C858, C876/C896, C912/C932, and C948/C1169. N-linked (GlcNAc...) asparagine glycosylation is present at N457. One can recognise an EGF-like 1 domain in the interval 549–589 (PVDGCLSNPCFPGAQCSSFPDGSWSCGSCPVGFLGNGTHCE). A glycan (N-linked (GlcNAc...) asparagine) is linked at N584. The EGF-like 2 domain maps to 648–692 (PENPCKDKTHNCHKHAECIYLGHFSDPMYKCECQTGYAGDGLICG). 8 TSP type-3 repeats span residues 693-728 (EDSD…NSGQ), 729-764 (EDFD…NPRQ), 765-787 (ADYD…NPAQ), 788-823 (IDTD…NTDQ), 824-846 (RDTD…NPDQ), 847-884 (TDVD…NANQ), 885-920 (ADHD…NPDQ), and 921-956 (EDLD…AISE). N710 carries an N-linked (GlcNAc...) asparagine glycan. The interval 843–931 (NPDQTDVDND…DLDGDGRGDI (89 aa)) is disordered. A compositionally biased stretch (acidic residues) spans 847-866 (TDVDNDLVGDQCDNNEDIDD). Positions 870–884 (QNNQDNCPYISNANQ) are enriched in polar residues. The span at 896 to 905 (CDPDDDNDGV) shows a compositional bias: acidic residues. The Cell attachment site motif lies at 928 to 930 (RGD). Positions 960 to 1172 (RNFQMVPLDP…SDLKYECRDI (213 aa)) constitute a TSP C-terminal domain. N1069 carries N-linked (GlcNAc...) asparagine glycosylation.

Belongs to the thrombospondin family. In terms of assembly, homotrimer; disulfide-linked. Interacts (via the TSP type I repeats) with CD36; the interaction conveys an antiangiogenic effect. Interacts (via the TSP type I repeats) with HRG; the interaction blocks the antiangiogenic effect of THBS2 with CD36. Can bind to fibrinogen, fibronectin, laminin and type V collagen. In terms of tissue distribution, high expression in invertebral disk tissue.

Functionally, adhesive glycoprotein that mediates cell-to-cell and cell-to-matrix interactions. Ligand for CD36 mediating antiangiogenic properties. This chain is Thrombospondin-2 (THBS2), found in Homo sapiens (Human).